The following is a 591-amino-acid chain: Trihelix transcription factor PTL (591 aa).

Residues 1 to 32 (MDQDQHPQYGIPELRQLMKGGGRTTTTTPSTS) form a disordered region. One can recognise a Myb-like 1 domain in the interval 118–177 (GRWPRQETLTLLEIRSRLDHKFKEANQKGPLWDEVSRIMSEEHGYQRSGKKCREKFENLY). A disordered region spans residues 380–410 (CSSPEERTNGNNEIRNNSETQNENGSDQTMT). Over residues 388–410 (NGNNEIRNNSETQNENGSDQTMT) the composition is skewed to polar residues. One can recognise a Myb-like 2 domain in the interval 422–479 (WGEQEILKLMEIRTSMDSTFQEILGGCSDEFLWEEIAAKLIQLGFDQRSALLCKEKWE). The disordered stretch occupies residues 491 to 551 (QINKKRKDNS…SNANANANVT (61 aa)). Positions 515-534 (IYNNRESGYNDNDPHQINEQ) are enriched in polar residues. Residues 535–551 (GNVGSSTSNANANANVT) are compositionally biased toward low complexity.

In terms of assembly, interacts with KIN10. In terms of tissue distribution, confined to flowers, at low levels. Also present in 7-days-old seedlings. Barely detectable in other tissues such as young seedlings, roots, stems, leaves and siliques. Expressed in flower primordia, more precisely between newly arisen sepal primordia and also at the basal margins of developing sepals.

The protein resides in the nucleus. Functionally, transcription factor that prevents growth. Regulates perianth architecture in flower, mostly in the second whorl, probably by suppressing growth between initiating sepals, ensuring that they remain separate, and by modulating organ shapes. Required for the establishment of auxin flux. This Arabidopsis thaliana (Mouse-ear cress) protein is Trihelix transcription factor PTL (PTL).